The chain runs to 133 residues: Large ribosomal subunit protein bL12 (133 aa).

The segment at 98 to 118 is disordered; sequence DMVESTPKPIKEGTGKEDAED.

This sequence belongs to the bacterial ribosomal protein bL12 family. As to quaternary structure, homodimer. Part of the ribosomal stalk of the 50S ribosomal subunit. Forms a multimeric L10(L12)X complex, where L10 forms an elongated spine to which 2 to 4 L12 dimers bind in a sequential fashion. Binds GTP-bound translation factors.

Functionally, forms part of the ribosomal stalk which helps the ribosome interact with GTP-bound translation factors. Is thus essential for accurate translation. This Crocosphaera subtropica (strain ATCC 51142 / BH68) (Cyanothece sp. (strain ATCC 51142)) protein is Large ribosomal subunit protein bL12.